The following is a 430-amino-acid chain: MKKKPFYKVLYVQVIFAIIVGVILGHFYPSIATDMKPLGDGFIKLIKMVIGPIIFCTVVTGIAGMEDMKKVGRVGGKALLYFEIVSTFALLLGLAATHLLRPGVGFNIDPATLDGKAVASYAAKAHGQSTVDFLMHIIPNTMVDAFAQGEILQILLIALLFGSVLAHLGERGKVVTDFIDGLTRVLFGIVHIVTKLAPIGAFGAMAFTIGKYGVGSLVPLLKLIGTFYLTSVVFVLVVLGAIARFTGFSIIRFVSYIKEELLIVLGTSSSEAALPQLMEKLEKAGCSRSVVGLVVPTGYSFNLDGTNIYMTMAVLFIAQATNIELTWMQQLTLLAVAMLTSKGASGVTGAGFITLAATLAVVPTIPLSGMVLILGIDRFMSECRALTNIVGNGVATVVVSAWEKELDRNKLRQALKGGGEVAPTETTAGV.

Helical transmembrane passes span Val9 to Pro29, Leu45 to Met65, Leu79 to Leu99, Gly149 to Gly169, Val185 to Met205, Leu223 to Ala243, Ile308 to Met328, and Ala356 to Ile376.

It belongs to the dicarboxylate/amino acid:cation symporter (DAACS) (TC 2.A.23) family.

The protein localises to the cell inner membrane. In terms of biological role, responsible for the transport of dicarboxylates such as succinate, fumarate, and malate from the periplasm across the membrane. The protein is C4-dicarboxylate transport protein of Burkholderia orbicola (strain AU 1054).